The sequence spans 162 residues: NADH-quinone oxidoreductase subunit I (162 aa).

2 4Fe-4S ferredoxin-type domains span residues 52–82 (LRRYPNGEERCIACKLCEAICPAQAITIEAG) and 93–122 (TRYDIDMVKCIYCGMCQEACPVDAIVEGPN). The [4Fe-4S] cluster site is built by Cys62, Cys65, Cys68, Cys72, Cys102, Cys105, Cys108, and Cys112.

Belongs to the complex I 23 kDa subunit family. In terms of assembly, NDH-1 is composed of 14 different subunits. Subunits NuoA, H, J, K, L, M, N constitute the membrane sector of the complex. The cofactor is [4Fe-4S] cluster.

Its subcellular location is the cell inner membrane. It catalyses the reaction a quinone + NADH + 5 H(+)(in) = a quinol + NAD(+) + 4 H(+)(out). In terms of biological role, NDH-1 shuttles electrons from NADH, via FMN and iron-sulfur (Fe-S) centers, to quinones in the respiratory chain. The immediate electron acceptor for the enzyme in this species is believed to be ubiquinone. Couples the redox reaction to proton translocation (for every two electrons transferred, four hydrogen ions are translocated across the cytoplasmic membrane), and thus conserves the redox energy in a proton gradient. This chain is NADH-quinone oxidoreductase subunit I, found in Methylorubrum extorquens (strain PA1) (Methylobacterium extorquens).